The following is an 855-amino-acid chain: Potassium transporter 13 (855 aa).

Residues 1-67 (MFHVEEESSG…EMDSDEEDDN (67 aa)) are disordered. Topologically, residues 1–105 (MFHVEEESSG…EIEDTGIGKK (105 aa)) are cytoplasmic. Positions 36–51 (EKDDYEVNEDYDDDGY) are enriched in acidic residues. Residues 106-126 (LILALQTLGVVFGDIGTSPLY) form a helical membrane-spanning segment. The Extracellular portion of the chain corresponds to 127 to 142 (TFTVMFRRSPINDKED). The helical transmembrane segment at 143–163 (IIGALSLVIYTLILIPLVKYV) threads the bilayer. The Cytoplasmic segment spans residues 164-233 (HFVLWANDDG…RLEASMALKK (70 aa)). Residues 234–254 (LLLILVLAGTAMVIADAVVTP) traverse the membrane as a helical segment. Residues 255–268 (AMSVMSAIGGLKVG) are Extracellular-facing. The helical transmembrane segment at 269–289 (VGVIEQDQVVVISVSFLVILF) threads the bilayer. The Cytoplasmic portion of the chain corresponds to 290-298 (SVQKYGTSK). A helical membrane pass occupies residues 299-319 (LGLVLGPALLLWFFCLAGIGI). Topologically, residues 320 to 346 (YNLVKYDSSVFKAFNPAYIYFFFKRNS) are extracellular. Residues 347-367 (VNAWYALGGCVLCATGSEAMF) traverse the membrane as a helical segment. Residues 368-379 (ADLSYFSVHSIQ) are Cytoplasmic-facing. Residues 380–400 (LTFILLVLPCLLLGYLGQAAY) traverse the membrane as a helical segment. The Extracellular segment spans residues 401–415 (LSENFSAAGDAFFSS). A glycan (N-linked (GlcNAc...) asparagine) is linked at Asn-404. A helical transmembrane segment spans residues 416-436 (VPSSLFWPVFLISNVAALIAS). The Cytoplasmic segment spans residues 437-467 (RAMTTATFTCIKQSIALGCFPRLKIIHTSKK). A helical transmembrane segment spans residues 468 to 488 (FIGQIYIPVLNWSLLVVCLIV). At 489-503 (VCSTSNIFAIGNAYG) the chain is on the extracellular side. Residues 504 to 524 (IAELGIMMTTTILVTLIMLLI) traverse the membrane as a helical segment. At 525–528 (WQTN) the chain is on the cytoplasmic side. The helical transmembrane segment at 529 to 549 (IIVVSMFAIVSLIVELVFFSS) threads the bilayer. Residues 550–553 (VCSS) are Extracellular-facing. The chain crosses the membrane as a helical span at residues 554 to 574 (VADGSWIILVFATIMFLIMFV). Topologically, residues 575–855 (WNYGSKLKYE…LMQVGMTYMV (281 aa)) are cytoplasmic. Ser-766 bears the Phosphoserine mark.

This sequence belongs to the HAK/KUP transporter (TC 2.A.72.3) family.

The protein resides in the cell membrane. Functionally, probable potassium transporter. The protein is Potassium transporter 13 (POT13) of Arabidopsis thaliana (Mouse-ear cress).